The sequence spans 147 residues: Large ribosomal subunit protein uL15 (147 aa).

Residues 1–13 show a composition bias toward basic and acidic residues; it reads MELHSLKAAEGSR. A disordered region spans residues 1-57; that stretch reads MELHSLKAAEGSRKVRNRVGRGTSSGNGKTSGRGQKGQKSRSGGGVRPGFEGGQTEL. Composition is skewed to gly residues over residues 23–35 and 42–52; these read TSSG…GRGQ and SGGGVRPGFEG.

It belongs to the universal ribosomal protein uL15 family. In terms of assembly, part of the 50S ribosomal subunit.

In terms of biological role, binds to the 23S rRNA. The chain is Large ribosomal subunit protein uL15 from Lactococcus lactis subsp. lactis (strain IL1403) (Streptococcus lactis).